Reading from the N-terminus, the 98-residue chain is MAIESINAASVLPKVTLGETAKTDNAAGAGNTFTQMLDSMSDTQSNAQTSVSNLLTTGEGNASDVLIQMKKAESEMKTAAVIRDNVIESYKQLLNMQV.

It belongs to the FliE family.

It is found in the bacterial flagellum basal body. The chain is Flagellar hook-basal body complex protein FliE from Listeria monocytogenes serovar 1/2a (strain ATCC BAA-679 / EGD-e).